Here is an 850-residue protein sequence, read N- to C-terminus: Response regulator sskA (850 aa).

2 disordered regions span residues 1–225 and 419–542; these read MPDR…GASS and IPQR…GQSP. Positions 7-25 are enriched in low complexity; sequence SQLLKSKLLRRSSTTATTS. Polar residues predominate over residues 117-138; sequence GANSRQEGSQNGSIQQSPTFTR. The span at 144-163 shows a compositional bias: basic and acidic residues; sequence QLTEEKDKGKLQSREGDQRG. A compositionally biased stretch (polar residues) spans 177-196; the sequence is SDPQYSLTTELANKPSTPQT. The span at 436–445 shows a compositional bias: basic and acidic residues; sequence HHSEPGEHGE. Polar residues predominate over residues 477 to 490; that stretch reads PSISILTTDSNMAS. Over residues 492-511 the composition is skewed to pro residues; that stretch reads PQPPVAAPQVPTPPGPPPES. One can recognise a Response regulatory domain in the interval 558–719; the sequence is NVLIVEDNII…WLEQKVTEWG (162 aa). D607 carries the post-translational modification 4-aspartylphosphate. The disordered stretch occupies residues 736–850; sequence FADEPQSSSP…DEEQQALDAT (115 aa). The span at 762 to 782 shows a compositional bias: low complexity; the sequence is SSRTSTSPSSAAVNATARAFA. Polar residues predominate over residues 819–828; that stretch reads TLDSPASPLT. The span at 839–850 shows a compositional bias: acidic residues; sequence PGDEEQQALDAT.

The protein belongs to the SSK1 family.

The protein localises to the cytoplasm. Its function is as follows. Final receptor of the osmolarity two-component system regulatory system, which controls activity of the sakA mitogen-activated protein kinase (MAPK) pathway in response to changes in the osmolarity of the extracellular environment. Regulates the germination in the airways that drives enhanced disease initiation and inflammation in the lungs. The protein is Response regulator sskA of Aspergillus fumigatus (strain ATCC MYA-4609 / CBS 101355 / FGSC A1100 / Af293) (Neosartorya fumigata).